A 100-amino-acid chain; its full sequence is Urease subunit gamma (100 aa).

Belongs to the urease gamma subunit family. In terms of assembly, heterotrimer of UreA (gamma), UreB (beta) and UreC (alpha) subunits. Three heterotrimers associate to form the active enzyme.

It is found in the cytoplasm. It catalyses the reaction urea + 2 H2O + H(+) = hydrogencarbonate + 2 NH4(+). The protein operates within nitrogen metabolism; urea degradation; CO(2) and NH(3) from urea (urease route): step 1/1. The protein is Urease subunit gamma of Paenarthrobacter aurescens (strain TC1).